The primary structure comprises 36 residues: Insecticidal toxin LaIT1 (36 aa).

2 cysteine pairs are disulfide-bonded: Cys-11–Cys-23 and Cys-17–Cys-29.

In terms of tissue distribution, expressed by the venom gland.

It is found in the secreted. Affects the activity of both ryanodine-sensitive calcium-release channels RyR1 and RyR2 with high potency. At lower concentrations the toxin increases full openings of the RyRs, and at higher concentrations it inhibits full openings and induce openings to subconductance levels and reduces the number of full conductance openings. The different actions may be attributed to the toxins binding at different sites on the RyRs, with binding at a high-affinity site mediating the increase in full openings and the induction of subconductance states evoked upon binding to a lower-affinity site. Shows insect lethality against crickets and common cutworms (only shows paralysis against cockroaches), but no toxicity is observed in mice. The protein is Insecticidal toxin LaIT1 of Liocheles australasiae (Dwarf wood scorpion).